We begin with the raw amino-acid sequence, 308 residues long: 3'(2'),5'-bisphosphate nucleotidase 1 (308 aa).

Position 2 is an N-acetylalanine (Ala2). The active-site Proton acceptor is the Asp51. Glu74, Asp117, Leu119, and Asp120 together coordinate Mg(2+). The active-site Proton acceptor is the Thr122. Thr122 bears the Phosphothreonine mark. AMP is bound by residues Thr195, His198, Gly220, and Lys224. Ser240 is modified (phosphoserine). An N6-succinyllysine modification is found at Lys244. Asp247 contributes to the Mg(2+) binding site.

It belongs to the inositol monophosphatase superfamily. The cofactor is Mg(2+). Highly expressed in kidney, liver, pancreas and heart. Detected at lower levels in brain, placenta, lung and skeletal muscle.

It catalyses the reaction adenosine 3',5'-bisphosphate + H2O = AMP + phosphate. The enzyme catalyses adenosine 2',5'-bisphosphate + H2O = AMP + phosphate. It carries out the reaction 3'-phosphoadenylyl sulfate + H2O = adenosine 5'-phosphosulfate + phosphate. The catalysed reaction is 1D-myo-inositol 1,4-bisphosphate + H2O = 1D-myo-inositol 4-phosphate + phosphate. It catalyses the reaction 1D-myo-inositol 1,3,4-trisphosphate + H2O = 1D-myo-inositol 3,4-bisphosphate + phosphate. Is very sensitive to inhibition by Li(+) (IC(50)=0.3 mM for hydrolysis of PAP; IC(50)=0.6 mM for hydrolysis of inositol-1,4-bis-phosphate). Is not affected by high Na(+) concentrations. In terms of biological role, phosphatase that converts 3'(2')-phosphoadenosine 5'-phosphate (PAP) to AMP and inositol 1,4-bisphosphate (Ins(1,4)P2) to inositol 4-phosphate. Is also able to hydrolyze adenosine 3'-phosphate 5'-phosphosulfate (PAPS) to adenosine 5'-phosphosulfate (APS). Probably prevents the toxic accumulation of PAP, a compound which inhibits a variety of proteins, including PAPS-utilizing enzymes such as sulfotransferases, and RNA processing enzymes. Could also play a role in inositol recycling and phosphoinositide metabolism. Is not active on 3'-AMP, inositol-1-phosphate and inositol-1,4,5-triphosphate. This Homo sapiens (Human) protein is 3'(2'),5'-bisphosphate nucleotidase 1 (BPNT1).